The primary structure comprises 74 residues: Small ribosomal subunit protein eS17 (74 aa).

Belongs to the eukaryotic ribosomal protein eS17 family.

This Ignicoccus hospitalis (strain KIN4/I / DSM 18386 / JCM 14125) protein is Small ribosomal subunit protein eS17.